The primary structure comprises 104 residues: Signal recognition particle 19 kDa protein (104 aa).

The protein belongs to the SRP19 family. In terms of assembly, part of the signal recognition particle protein translocation system, which is composed of SRP and FtsY. Archaeal SRP consists of a 7S RNA molecule of 300 nucleotides and two protein subunits: SRP54 and SRP19.

Its subcellular location is the cytoplasm. Involved in targeting and insertion of nascent membrane proteins into the cytoplasmic membrane. Binds directly to 7S RNA and mediates binding of the 54 kDa subunit of the SRP. The chain is Signal recognition particle 19 kDa protein from Archaeoglobus fulgidus (strain ATCC 49558 / DSM 4304 / JCM 9628 / NBRC 100126 / VC-16).